Reading from the N-terminus, the 318-residue chain is MNQLEYLKKYTTVVVDSGDINYIKKYQPNDATTNPTLILKSVLSNKYNYIIDNSIQYAKDIGGNKLTQVKNASDMISVGFGIEILKYIPGYISTEIDARLSFNTKKCVSKAIKLIKLYNNNGIDTSRVLIKLAATWECIEAARQLKKIGILCNLTLLFSFAQARACADADVFLISPFVGRIYDWYQKFNLNSPYCSNTDPGVIALKKIFFYYKKYGYKTIIMGASFRKLEQIQELVGCDRITISLDLLKQLSMKKDILIKKLDVKKITKVNTKPNALSESEFRFLHNEDAMAVEKLSEGIRQFSSDQQELENFLFDKL.

The Schiff-base intermediate with substrate role is filled by Lys131.

This sequence belongs to the transaldolase family. Type 1 subfamily. In terms of assembly, homodimer.

It localises to the cytoplasm. The enzyme catalyses D-sedoheptulose 7-phosphate + D-glyceraldehyde 3-phosphate = D-erythrose 4-phosphate + beta-D-fructose 6-phosphate. Its pathway is carbohydrate degradation; pentose phosphate pathway; D-glyceraldehyde 3-phosphate and beta-D-fructose 6-phosphate from D-ribose 5-phosphate and D-xylulose 5-phosphate (non-oxidative stage): step 2/3. In terms of biological role, transaldolase is important for the balance of metabolites in the pentose-phosphate pathway. The sequence is that of Transaldolase from Buchnera aphidicola subsp. Cinara cedri (strain Cc).